A 1632-amino-acid polypeptide reads, in one-letter code: uncharacterized protein (1632 aa).

Over residues 1-15 the composition is skewed to polar residues; the sequence is MSNNKQTAAPAATSN. A disordered region spans residues 1-23; sequence MSNNKQTAAPAATSNEKAENGAE. Over 1-63 the chain is Cytoplasmic; that stretch reads MSNNKQTAAP…TKDAFKGKYR (63 aa). The helical transmembrane segment at 64–86 threads the bilayer; the sequence is VFYGNGLHTSIMFGAGTAALDLM. Over 87–1632 the chain is Extracellular; the sequence is TPGSFLPPFP…ESDGEEMSGE (1546 aa). Asparagine 149 and asparagine 274 each carry an N-linked (GlcNAc...) asparagine; by host glycan. Residues 516–538 form a disordered region; the sequence is ELSSQLGDTDTKKEQKEKRSKQG. Asparagine 654, asparagine 719, and asparagine 797 each carry an N-linked (GlcNAc...) asparagine; by host glycan. The interval 838 to 890 is disordered; that stretch reads IKGTKKSDDGDSKTDGSGDMEDDFTSLAKMTNRKRKAGGKDGPSKKKKKDGAD. Basic and acidic residues-rich tracts occupy residues 842–853 and 875–890; these read KKSDDGDSKTDG and GGKD…DGAD. Asparagine 1012, asparagine 1031, asparagine 1261, asparagine 1339, asparagine 1511, and asparagine 1546 each carry an N-linked (GlcNAc...) asparagine; by host glycan. Positions 1603-1632 are disordered; the sequence is PSAMDVDEDEDEDMDDESDDESDGEEMSGE. Residues 1607-1632 show a composition bias toward acidic residues; sequence DVDEDEDEDMDDESDDESDGEEMSGE.

Its subcellular location is the host membrane. This is an uncharacterized protein from Ostreid herpesvirus 1 (isolate France) (OsHV-1).